Consider the following 82-residue polypeptide: UPF0410 protein YeaQ (82 aa).

Transmembrane regions (helical) follow at residues 26–46 (GGGF…GGWI) and 57–77 (GFNF…LFIY).

Belongs to the UPF0410 family.

The protein resides in the cell inner membrane. This Escherichia coli O157:H7 protein is UPF0410 protein YeaQ (yeaQ).